Consider the following 310-residue polypeptide: Cytosolic Fe-S cluster assembly factor Nubp1 homolog (310 aa).

4 residues coordinate [4Fe-4S] cluster: C8, C22, C25, and C31. Residue 62 to 69 participates in ATP binding; it reads GKGGVGKS. [4Fe-4S] cluster-binding residues include C239 and C242.

The protein belongs to the Mrp/NBP35 ATP-binding proteins family. NUBP1/NBP35 subfamily. In terms of assembly, heterotetramer of 2 Nubp1 and 2 Nubp2 chains. It depends on [4Fe-4S] cluster as a cofactor.

It localises to the cytoplasm. Component of the cytosolic iron-sulfur (Fe/S) protein assembly (CIA) machinery. Required for maturation of extramitochondrial Fe-S proteins. The Nubp1-Nubp2 heterotetramer forms a Fe-S scaffold complex, mediating the de novo assembly of an Fe-S cluster and its transfer to target apoproteins. This is Cytosolic Fe-S cluster assembly factor Nubp1 homolog from Drosophila ananassae (Fruit fly).